The following is a 392-amino-acid chain: Succinate--CoA ligase [ADP-forming] subunit beta (392 aa).

An ATP-grasp domain is found at 9–248; the sequence is KGILKQFGVA…ITEEDPLEYE (240 aa). ATP contacts are provided by residues K50, 57–59, E103, M106, and E111; that span reads GRG. The Mg(2+) site is built by N203 and D217. Substrate contacts are provided by residues N268 and 325 to 327; that span reads GIV.

This sequence belongs to the succinate/malate CoA ligase beta subunit family. As to quaternary structure, heterotetramer of two alpha and two beta subunits. It depends on Mg(2+) as a cofactor.

The catalysed reaction is succinate + ATP + CoA = succinyl-CoA + ADP + phosphate. The enzyme catalyses GTP + succinate + CoA = succinyl-CoA + GDP + phosphate. It participates in carbohydrate metabolism; tricarboxylic acid cycle; succinate from succinyl-CoA (ligase route): step 1/1. Its function is as follows. Succinyl-CoA synthetase functions in the citric acid cycle (TCA), coupling the hydrolysis of succinyl-CoA to the synthesis of either ATP or GTP and thus represents the only step of substrate-level phosphorylation in the TCA. The beta subunit provides nucleotide specificity of the enzyme and binds the substrate succinate, while the binding sites for coenzyme A and phosphate are found in the alpha subunit. This Chlorobaculum tepidum (strain ATCC 49652 / DSM 12025 / NBRC 103806 / TLS) (Chlorobium tepidum) protein is Succinate--CoA ligase [ADP-forming] subunit beta.